A 668-amino-acid chain; its full sequence is Metastasis-associated protein MTA2 (668 aa).

Residues 1 to 144 (MAANMYRVGD…PVQKTLLADQ (144 aa)) form the BAH domain. Phosphoserine is present on residues Ser52 and Ser54. One can recognise an ELM2 domain in the interval 145–256 (GEIRVGCKYQ…KAMSTLVPQG (112 aa)). Lys152 is subject to N6-acetyllysine. The region spanning 263-315 (DEMEEWSASEAMLFEEALEKYGKDFNDIRQDFLPWKSLASIVQFYYMWKTTDR) is the SANT domain. The segment at 367–394 (CESCHTTQSAQWYAWGPPNMQCRLCASC) adopts a GATA-type; atypical zinc-finger fold. Over residues 409-419 (QLEGATRGTTE) the composition is skewed to polar residues. A disordered region spans residues 409–437 (QLEGATRGTTEPHSRGHLSRPEAQSLSPY). Phosphoserine occurs at positions 433 and 435. Lys460 bears the N6-acetyllysine mark. Lys492 participates in a covalent cross-link: Glycyl lysine isopeptide (Lys-Gly) (interchain with G-Cter in SUMO2 and SUMO3); alternate. Lys492 participates in a covalent cross-link: Glycyl lysine isopeptide (Lys-Gly) (interchain with G-Cter in SUMO2); alternate. A Glycyl lysine isopeptide (Lys-Gly) (interchain with G-Cter in SUMO2) cross-link involves residue Lys508. Lys522 and Lys531 each carry N6-acetyllysine. Residue Thr534 is modified to Phosphothreonine. Ser548 is modified (phosphoserine). Residues Lys559 and Lys595 each participate in a glycyl lysine isopeptide (Lys-Gly) (interchain with G-Cter in SUMO2) cross-link. 2 disordered regions span residues 580–599 (ASGI…LNPA) and 647–668 (PPVP…VLED).

The protein belongs to the metastasis-associated protein family. As to quaternary structure, component of the nucleosome remodeling and deacetylase (NuRD) repressor complex, composed of core proteins MTA1, MTA2, MTA3, RBBP4, RBBP7, HDAC1, HDAC2, MBD2, MBD3, and peripherally associated proteins CDK2AP1, CDK2AP2, GATAD2A, GATAD2B, CHD3, CHD4 and CHD5. The exact stoichiometry of the NuRD complex is unknown, and some subunits such as MBD2 and MBD3, GATAD2A and GATAD2B, and CHD3, CHD4 and CHD5 define mutually exclusive NuRD complexes. Interacts with CHD3. Interacts with CHD4. Interacts with GATAD2A. Interacts with HDAC7. Interacts with MBD3. Interacts with p53/TP53. Interacts with MINT. Interacts with PIMREG. Interacts with NACC2. Interacts with ERCC6. Interacts with PWWP2B. Interacts with transcription factor BCL11A. In terms of tissue distribution, widely expressed.

The protein resides in the nucleus. May function as a transcriptional coregulator. Acts as a component of the histone deacetylase NuRD complex which participates in the remodeling of chromatin. This is Metastasis-associated protein MTA2 (MTA2) from Homo sapiens (Human).